Consider the following 122-residue polypeptide: Biogenesis of lysosome-related organelles complex 1 subunit CNL1 (122 aa).

Over residues 1-10 (MQDNSSHSRE) the composition is skewed to basic and acidic residues. Positions 1–21 (MQDNSSHSRESASAGDDPLGI) are disordered. The stretch at 63–95 (ENTIDKNIAKFKELLEKCDTLENHYEMLNQLAI) forms a coiled coil.

The protein belongs to the BLOC1S4 family. Component of the biogenesis of lysosome-related organelles complex-1 (BLOC-1) composed of at least BLI1, BLS1, CNL1, KXD1, SNN1 and VAB2.

It is found in the cytoplasm. Component of the biogenesis of lysosome-related organelles complex-1 (BLOC-1), a complex that is involved in endosomal cargo sorting. The protein is Biogenesis of lysosome-related organelles complex 1 subunit CNL1 (CLN1) of Saccharomyces cerevisiae (strain Lalvin QA23) (Baker's yeast).